Reading from the N-terminus, the 184-residue chain is Ribosome maturation factor RimM (184 aa).

Residues 101-174 enclose the PRC barrel domain; the sequence is PDEYYDHQLV…RVVIADRPGL (74 aa).

The protein belongs to the RimM family. In terms of assembly, binds ribosomal protein uS19.

The protein localises to the cytoplasm. In terms of biological role, an accessory protein needed during the final step in the assembly of 30S ribosomal subunit, possibly for assembly of the head region. Essential for efficient processing of 16S rRNA. May be needed both before and after RbfA during the maturation of 16S rRNA. It has affinity for free ribosomal 30S subunits but not for 70S ribosomes. The sequence is that of Ribosome maturation factor RimM from Nocardioides sp. (strain ATCC BAA-499 / JS614).